The primary structure comprises 250 residues: Tripartite motif-containing protein 73 (250 aa).

The RING-type zinc-finger motif lies at 16-57 (CPICLEVFKESLMLQCGHSYCKGCLVSLSYHLDTKVRCPMCW). The B box-type zinc-finger motif lies at 84–125 (PEPKVCVHHRNPLSLFCEKDQELICGLCGLLGSHQHHPVTPV). Residues Cys89, His92, Cys111, and His117 each coordinate Zn(2+). Coiled-coil stretches lie at residues 125 to 169 (VSTV…NESD) and 204 to 235 (LVAS…FGNE).

The protein belongs to the TRIM/RBCC family.

The polypeptide is Tripartite motif-containing protein 73 (TRIM73) (Homo sapiens (Human)).